The primary structure comprises 365 residues: Putative outer membrane porin protein NmpC (365 aa).

The signal sequence occupies residues 1-23; that stretch reads MKKLTVAISAVAASVLMAMSAQA.

The protein belongs to the Gram-negative porin family. In terms of assembly, homotrimer.

It is found in the cell outer membrane. The polypeptide is Putative outer membrane porin protein NmpC (nmpC) (Escherichia coli (strain K12)).